Reading from the N-terminus, the 187-residue chain is Elongation factor P (187 aa).

It belongs to the elongation factor P family.

It is found in the cytoplasm. The protein operates within protein biosynthesis; polypeptide chain elongation. Its function is as follows. Involved in peptide bond synthesis. Stimulates efficient translation and peptide-bond synthesis on native or reconstituted 70S ribosomes in vitro. Probably functions indirectly by altering the affinity of the ribosome for aminoacyl-tRNA, thus increasing their reactivity as acceptors for peptidyl transferase. The sequence is that of Elongation factor P from Mycoplasmopsis agalactiae (strain NCTC 10123 / CIP 59.7 / PG2) (Mycoplasma agalactiae).